Consider the following 432-residue polypeptide: Glutamyl-tRNA reductase (432 aa).

Substrate is bound by residues T49 to R52, S107, E112 to Q114, and Q118. C50 serves as the catalytic Nucleophile. G186–G191 contributes to the NADP(+) binding site.

It belongs to the glutamyl-tRNA reductase family. In terms of assembly, homodimer.

It catalyses the reaction (S)-4-amino-5-oxopentanoate + tRNA(Glu) + NADP(+) = L-glutamyl-tRNA(Glu) + NADPH + H(+). The protein operates within porphyrin-containing compound metabolism; protoporphyrin-IX biosynthesis; 5-aminolevulinate from L-glutamyl-tRNA(Glu): step 1/2. Catalyzes the NADPH-dependent reduction of glutamyl-tRNA(Glu) to glutamate 1-semialdehyde (GSA). The sequence is that of Glutamyl-tRNA reductase from Campylobacter jejuni subsp. jejuni serotype O:2 (strain ATCC 700819 / NCTC 11168).